The primary structure comprises 169 residues: Flagellar biosynthetic protein FliU (169 aa).

The protein belongs to the FliB family.

Functionally, required for the secretion of flagellin and expression of motility. This is Flagellar biosynthetic protein FliU (fliU) from Salmonella muenchen.